Consider the following 114-residue polypeptide: T cell receptor beta variable 4-1 (114 aa).

Residues M1–T21 form the signal peptide. One can recognise an Ig-like domain in the interval E22–Q114. C42 and C110 are joined by a disulfide. Residues N76 and N89 are each glycosylated (N-linked (GlcNAc...) asparagine).

In terms of assembly, alpha-beta TR is a heterodimer composed of an alpha and beta chain; disulfide-linked. The alpha-beta TR is associated with the transmembrane signaling CD3 coreceptor proteins to form the TR-CD3 (TcR or TCR). The assembly of alpha-beta TR heterodimers with CD3 occurs in the endoplasmic reticulum where a single alpha-beta TR heterodimer associates with one CD3D-CD3E heterodimer, one CD3G-CD3E heterodimer and one CD247 homodimer forming a stable octameric structure. CD3D-CD3E and CD3G-CD3E heterodimers preferentially associate with TR alpha and TR beta chains, respectively. The association of the CD247 homodimer is the last step of TcR assembly in the endoplasmic reticulum and is required for transport to the cell surface.

The protein resides in the cell membrane. Functionally, v region of the variable domain of T cell receptor (TR) beta chain that participates in the antigen recognition. Alpha-beta T cell receptors are antigen specific receptors which are essential to the immune response and are present on the cell surface of T lymphocytes. Recognize peptide-major histocompatibility (MH) (pMH) complexes that are displayed by antigen presenting cells (APC), a prerequisite for efficient T cell adaptive immunity against pathogens. Binding of alpha-beta TR to pMH complex initiates TR-CD3 clustering on the cell surface and intracellular activation of LCK that phosphorylates the ITAM motifs of CD3G, CD3D, CD3E and CD247 enabling the recruitment of ZAP70. In turn ZAP70 phosphorylates LAT, which recruits numerous signaling molecules to form the LAT signalosome. The LAT signalosome propagates signal branching to three major signaling pathways, the calcium, the mitogen-activated protein kinase (MAPK) kinase and the nuclear factor NF-kappa-B (NF-kB) pathways, leading to the mobilization of transcription factors that are critical for gene expression and essential for T cell growth and differentiation. The T cell repertoire is generated in the thymus, by V-(D)-J rearrangement. This repertoire is then shaped by intrathymic selection events to generate a peripheral T cell pool of self-MH restricted, non-autoaggressive T cells. Post-thymic interaction of alpha-beta TR with the pMH complexes shapes TR structural and functional avidity. The sequence is that of T cell receptor beta variable 4-1 from Homo sapiens (Human).